The primary structure comprises 831 residues: Periplasmic nitrate reductase (831 aa).

Residues 1 to 29 constitute a signal peptide (tat-type signal); it reads MTLSRRDFIKQTAVAATASVAGVTLPAGA. Positions 41–97 constitute a 4Fe-4S Mo/W bis-MGD-type domain; it reads LKWSKAPCRFCGTGCGVTVAVRDNKVVATNGDPQAEVNKGLNCVKGYFLSKIMYGQD. Residues Cys48, Cys51, Cys55, and Cys83 each contribute to the [4Fe-4S] cluster site. Residues Lys85, Gln152, Asn177, Cys181, 214–221, 245–249, 264–266, Met375, Gln379, Asn485, 511–512, Lys534, Asp561, and 721–730 each bind Mo-bis(molybdopterin guanine dinucleotide); these read WGSNMAEM, STFTH, QTD, SD, and TGRVLEHWHS. Trp797 contacts substrate. Asn805 and Lys822 together coordinate Mo-bis(molybdopterin guanine dinucleotide).

It belongs to the prokaryotic molybdopterin-containing oxidoreductase family. NasA/NapA/NarB subfamily. Component of the periplasmic nitrate reductase NapAB complex composed of NapA and NapB. Requires [4Fe-4S] cluster as cofactor. Mo-bis(molybdopterin guanine dinucleotide) is required as a cofactor. Post-translationally, predicted to be exported by the Tat system. The position of the signal peptide cleavage has not been experimentally proven.

It is found in the periplasm. It catalyses the reaction 2 Fe(II)-[cytochrome] + nitrate + 2 H(+) = 2 Fe(III)-[cytochrome] + nitrite + H2O. In terms of biological role, catalytic subunit of the periplasmic nitrate reductase complex NapAB. Receives electrons from NapB and catalyzes the reduction of nitrate to nitrite. The protein is Periplasmic nitrate reductase of Cupriavidus taiwanensis (strain DSM 17343 / BCRC 17206 / CCUG 44338 / CIP 107171 / LMG 19424 / R1) (Ralstonia taiwanensis (strain LMG 19424)).